The primary structure comprises 160 residues: Large ribosomal subunit protein uL15 (160 aa).

The span at 1–13 shows a compositional bias: basic and acidic residues; sequence MKLNELRDNEGAA. Residues 1-51 are disordered; that stretch reads MKLNELRDNEGAARKKKRVARGPGSGKGKTAGRGIKGQKSRSGVALNGYEG. A compositionally biased stretch (gly residues) spans 23–35; the sequence is PGSGKGKTAGRGI.

It belongs to the universal ribosomal protein uL15 family. Part of the 50S ribosomal subunit.

In terms of biological role, binds to the 23S rRNA. In Cereibacter sphaeroides (strain ATCC 17025 / ATH 2.4.3) (Rhodobacter sphaeroides), this protein is Large ribosomal subunit protein uL15.